The sequence spans 213 residues: Protein-L-isoaspartate O-methyltransferase (213 aa).

Serine 58 is a catalytic residue.

Belongs to the methyltransferase superfamily. L-isoaspartyl/D-aspartyl protein methyltransferase family.

It is found in the cytoplasm. It carries out the reaction [protein]-L-isoaspartate + S-adenosyl-L-methionine = [protein]-L-isoaspartate alpha-methyl ester + S-adenosyl-L-homocysteine. Functionally, catalyzes the methyl esterification of L-isoaspartyl residues in peptides and proteins that result from spontaneous decomposition of normal L-aspartyl and L-asparaginyl residues. It plays a role in the repair and/or degradation of damaged proteins. This Chlorobaculum tepidum (strain ATCC 49652 / DSM 12025 / NBRC 103806 / TLS) (Chlorobium tepidum) protein is Protein-L-isoaspartate O-methyltransferase.